The primary structure comprises 309 residues: tRNA-cytidine(32) 2-sulfurtransferase (309 aa).

The short motif at 57 to 62 (SGGKDS) is the PP-loop motif element. C132, C135, and C223 together coordinate [4Fe-4S] cluster.

This sequence belongs to the TtcA family. In terms of assembly, homodimer. It depends on Mg(2+) as a cofactor. Requires [4Fe-4S] cluster as cofactor.

The protein resides in the cytoplasm. It catalyses the reaction cytidine(32) in tRNA + S-sulfanyl-L-cysteinyl-[cysteine desulfurase] + AH2 + ATP = 2-thiocytidine(32) in tRNA + L-cysteinyl-[cysteine desulfurase] + A + AMP + diphosphate + H(+). Its pathway is tRNA modification. Its function is as follows. Catalyzes the ATP-dependent 2-thiolation of cytidine in position 32 of tRNA, to form 2-thiocytidine (s(2)C32). The sulfur atoms are provided by the cysteine/cysteine desulfurase (IscS) system. The sequence is that of tRNA-cytidine(32) 2-sulfurtransferase from Variovorax paradoxus (strain S110).